We begin with the raw amino-acid sequence, 809 residues long: Eukaryotic translation initiation factor 3 subunit C (809 aa).

A disordered region spans residues 1–102; the sequence is MSRFFAASYE…DSDESDEASK (102 aa). Acidic residues-rich tracts occupy residues 18 to 30 and 37 to 59; these read SEEDLLSSSEEEL and SEEESDDSFFNDSESESDFDSDD. The PCI domain maps to 605–780; sequence FHEHINLDLI…SVLSIAKGAE (176 aa).

It belongs to the eIF-3 subunit C family. As to quaternary structure, component of the eukaryotic translation initiation factor 3 (eIF-3) complex.

The protein localises to the cytoplasm. Component of the eukaryotic translation initiation factor 3 (eIF-3) complex, which is involved in protein synthesis of a specialized repertoire of mRNAs and, together with other initiation factors, stimulates binding of mRNA and methionyl-tRNAi to the 40S ribosome. The eIF-3 complex specifically targets and initiates translation of a subset of mRNAs involved in cell proliferation. The chain is Eukaryotic translation initiation factor 3 subunit C from Vanderwaltozyma polyspora (strain ATCC 22028 / DSM 70294 / BCRC 21397 / CBS 2163 / NBRC 10782 / NRRL Y-8283 / UCD 57-17) (Kluyveromyces polysporus).